The following is a 276-amino-acid chain: Monoglyceride lipase homolog (276 aa).

Belongs to the orthopoxvirus OPG043 family.

This Cynomys gunnisoni (Gunnison's prairie dog) protein is Monoglyceride lipase homolog (OPG043).